A 464-amino-acid polypeptide reads, in one-letter code: GTPase Der (464 aa).

EngA-type G domains are found at residues 3–166 (ALVA…PVLE) and 177–350 (LQFA…QSAN). GTP-binding positions include 9–16 (GRPNVGKS), 56–60 (DTGGV), 118–121 (NKAE), 183–190 (GRPNVGKS), 230–234 (DTAGI), and 295–298 (NKWD). Residues 351–435 (SHLPTGELNR…PIALEFRTVK (85 aa)) form the KH-like domain.

The protein belongs to the TRAFAC class TrmE-Era-EngA-EngB-Septin-like GTPase superfamily. EngA (Der) GTPase family. Associates with the 50S ribosomal subunit.

GTPase that plays an essential role in the late steps of ribosome biogenesis. This chain is GTPase Der, found in Nitrosococcus oceani (strain ATCC 19707 / BCRC 17464 / JCM 30415 / NCIMB 11848 / C-107).